A 189-amino-acid polypeptide reads, in one-letter code: Methylated-DNA--protein-cysteine methyltransferase (189 aa).

Residues Y128 and R142 each coordinate DNA. Catalysis depends on C159, which acts as the Nucleophile; methyl group acceptor. Residue S165 coordinates DNA.

Belongs to the MGMT family.

It localises to the nucleus. It carries out the reaction a 6-O-methyl-2'-deoxyguanosine in DNA + L-cysteinyl-[protein] = S-methyl-L-cysteinyl-[protein] + a 2'-deoxyguanosine in DNA. The catalysed reaction is a 4-O-methyl-thymidine in DNA + L-cysteinyl-[protein] = a thymidine in DNA + S-methyl-L-cysteinyl-[protein]. In terms of biological role, involved in the cellular defense against the biological effects of O6-methylguanine (O6-MeG) and O4-methylthymine (O4-MeT) in DNA. Repairs the methylated nucleobase in DNA by stoichiometrically transferring the methyl group to a cysteine residue in the enzyme. This is a suicide reaction: the enzyme is irreversibly inactivated. The sequence is that of Methylated-DNA--protein-cysteine methyltransferase (MGT1) from Kluyveromyces lactis (strain ATCC 8585 / CBS 2359 / DSM 70799 / NBRC 1267 / NRRL Y-1140 / WM37) (Yeast).